Consider the following 884-residue polypeptide: Alanine--tRNA ligase (884 aa).

Zn(2+)-binding residues include H565, H569, C674, and H678.

This sequence belongs to the class-II aminoacyl-tRNA synthetase family. The cofactor is Zn(2+).

Its subcellular location is the cytoplasm. The enzyme catalyses tRNA(Ala) + L-alanine + ATP = L-alanyl-tRNA(Ala) + AMP + diphosphate. In terms of biological role, catalyzes the attachment of alanine to tRNA(Ala) in a two-step reaction: alanine is first activated by ATP to form Ala-AMP and then transferred to the acceptor end of tRNA(Ala). Also edits incorrectly charged Ser-tRNA(Ala) and Gly-tRNA(Ala) via its editing domain. The protein is Alanine--tRNA ligase of Xanthobacter autotrophicus (strain ATCC BAA-1158 / Py2).